The following is a 592-amino-acid chain: Putative amidase ARB_02965 (592 aa).

The first 21 residues, 1-21 (MKGPITFLLQLGAVYTSIASA), serve as a signal peptide directing secretion. The N-linked (GlcNAc...) asparagine glycan is linked to asparagine 120. Lysine 161 serves as the catalytic Charge relay system. An N-linked (GlcNAc...) asparagine glycan is attached at asparagine 217. Serine 242 functions as the Charge relay system in the catalytic mechanism. Residues serine 242 and 263 to 266 (TSGS) each bind substrate. The active-site Acyl-ester intermediate is the serine 266. N-linked (GlcNAc...) asparagine glycans are attached at residues asparagine 326, asparagine 430, and asparagine 528.

Belongs to the amidase family.

It is found in the secreted. This Arthroderma benhamiae (strain ATCC MYA-4681 / CBS 112371) (Trichophyton mentagrophytes) protein is Putative amidase ARB_02965.